The sequence spans 325 residues: NADH-quinone oxidoreductase subunit H (325 aa).

8 helical membrane passes run 11–31, 81–101, 114–134, 154–174, 186–206, 237–257, 265–285, and 304–324; these read ILIS…CGAF, AIFT…FAIV, IGIL…LFAG, LSYE…AGSF, VWNV…GVAV, FFVG…TLFF, LPPF…FILI, and VCLP…LYNA.

It belongs to the complex I subunit 1 family. As to quaternary structure, NDH-1 is composed of 13 different subunits. Subunits NuoA, H, J, K, L, M, N constitute the membrane sector of the complex.

The protein resides in the cell inner membrane. It catalyses the reaction a quinone + NADH + 5 H(+)(in) = a quinol + NAD(+) + 4 H(+)(out). Its function is as follows. NDH-1 shuttles electrons from NADH, via FMN and iron-sulfur (Fe-S) centers, to quinones in the respiratory chain. The immediate electron acceptor for the enzyme in this species is believed to be ubiquinone. Couples the redox reaction to proton translocation (for every two electrons transferred, four hydrogen ions are translocated across the cytoplasmic membrane), and thus conserves the redox energy in a proton gradient. This subunit may bind ubiquinone. This Yersinia enterocolitica serotype O:8 / biotype 1B (strain NCTC 13174 / 8081) protein is NADH-quinone oxidoreductase subunit H.